A 504-amino-acid polypeptide reads, in one-letter code: ATP synthase subunit beta (504 aa).

181 to 188 (GGAGVGKT) serves as a coordination point for ATP.

Belongs to the ATPase alpha/beta chains family. In terms of assembly, F-type ATPases have 2 components, CF(1) - the catalytic core - and CF(0) - the membrane proton channel. CF(1) has five subunits: alpha(3), beta(3), gamma(1), delta(1), epsilon(1). CF(0) has three main subunits: a(1), b(2) and c(9-12). The alpha and beta chains form an alternating ring which encloses part of the gamma chain. CF(1) is attached to CF(0) by a central stalk formed by the gamma and epsilon chains, while a peripheral stalk is formed by the delta and b chains.

The protein resides in the cell inner membrane. It carries out the reaction ATP + H2O + 4 H(+)(in) = ADP + phosphate + 5 H(+)(out). Functionally, produces ATP from ADP in the presence of a proton gradient across the membrane. The catalytic sites are hosted primarily by the beta subunits. This is ATP synthase subunit beta from Ehrlichia ruminantium (strain Gardel).